Here is a 181-residue protein sequence, read N- to C-terminus: Ribulose bisphosphate carboxylase small subunit, chloroplastic (181 aa).

The N-terminal 56 residues, 1 to 56 (MASISSSAIATVNRTTSTQASLAAPFTGLKSNVAFPVTKKANNDFSSLPSNGGRVQ), are a transit peptide targeting the chloroplast.

The protein belongs to the RuBisCO small chain family. As to quaternary structure, heterohexadecamer of 8 large and 8 small subunits.

The protein localises to the plastid. The protein resides in the chloroplast. RuBisCO catalyzes two reactions: the carboxylation of D-ribulose 1,5-bisphosphate, the primary event in carbon dioxide fixation, as well as the oxidative fragmentation of the pentose substrate. Both reactions occur simultaneously and in competition at the same active site. Although the small subunit is not catalytic it is essential for maximal activity. In Lactuca sativa (Garden lettuce), this protein is Ribulose bisphosphate carboxylase small subunit, chloroplastic.